We begin with the raw amino-acid sequence, 468 residues long: Alcohol dehydrogenase (quinone), cytochrome c subunit (468 aa).

Residues 1–23 form the signal peptide; sequence MINRLKVTFSAAAFSLLAGTALA. Cytochrome c domains lie at 31-134, 178-293, and 317-407; these read ALVQ…MHGV, PEIA…KSLP, and TASV…RTSW. Heme c contacts are provided by C45, C48, H49, C193, C196, H197, C330, C333, and H334.

The alcohol dehydrogenase multicomponent enzyme system is composed of a dehydrogenase subunit I (AdhA) and a cytochrome c subunit II (AdhB). Requires heme c as cofactor.

Its subcellular location is the cell membrane. It catalyses the reaction ethanol + a ubiquinone = a ubiquinol + acetaldehyde. In terms of biological role, cytochrome c component of the alcohol dehydrogenase multicomponent enzyme system which is involved in the production of acetic acid and in the ethanol oxidase respiratory chain. Quinohemoprotein alcohol dehydrogenase (ADH) catalyzes the oxidation of ethanol to acetaldehyde by transferring electrons to the ubiquinone embedded in the membrane phospholipids. The electrons transfer from ethanol to membranous ubiquinone occurs from pyrroloquinoline quinone (PQQ) to one heme c in subunit I (AdhA), and finally to two heme c in subunit II (AdhB). Besides ubiquinone reduction, ADH also has a ubiquinol (QH2) oxidation reaction which mediates electron transfer from ubiquinol to the non-energy generating bypass oxidase system. The electrons transfer occurs from ubiquinol (QH2) to the additional heme c within subunit II (AdhB). The protein is Alcohol dehydrogenase (quinone), cytochrome c subunit of Gluconacetobacter polyoxogenes (Acetobacter polyoxogenes).